The sequence spans 544 residues: CTP synthase (544 aa).

The interval 1-267 is amidoligase domain; that stretch reads MSKFIFVTGG…GDLLVSRLHL (267 aa). Ser13 provides a ligand contact to CTP. Ser13 provides a ligand contact to UTP. 14 to 19 provides a ligand contact to ATP; the sequence is SVGKGI. L-glutamine is bound at residue Tyr54. Asp71 lines the ATP pocket. 2 residues coordinate Mg(2+): Asp71 and Glu141. CTP-binding positions include 148-150, 188-193, and Lys224; these read DIE and KTKPTQ. UTP-binding positions include 188-193 and Lys224; that span reads KTKPTQ. Residues 299 to 534 form the Glutamine amidotransferase type-1 domain; the sequence is YVELKDAYYS…INAAKKVIRD (236 aa). Gly354 is an L-glutamine binding site. The active-site Nucleophile; for glutamine hydrolysis is the Cys381. L-glutamine-binding positions include 382-385, Glu405, and Arg462; that span reads LGMQ. Catalysis depends on residues His507 and Glu509.

It belongs to the CTP synthase family. In terms of assembly, homotetramer.

The catalysed reaction is UTP + L-glutamine + ATP + H2O = CTP + L-glutamate + ADP + phosphate + 2 H(+). It carries out the reaction L-glutamine + H2O = L-glutamate + NH4(+). It catalyses the reaction UTP + NH4(+) + ATP = CTP + ADP + phosphate + 2 H(+). The protein operates within pyrimidine metabolism; CTP biosynthesis via de novo pathway; CTP from UDP: step 2/2. With respect to regulation, allosterically activated by GTP, when glutamine is the substrate; GTP has no effect on the reaction when ammonia is the substrate. The allosteric effector GTP functions by stabilizing the protein conformation that binds the tetrahedral intermediate(s) formed during glutamine hydrolysis. Inhibited by the product CTP, via allosteric rather than competitive inhibition. Functionally, catalyzes the ATP-dependent amination of UTP to CTP with either L-glutamine or ammonia as the source of nitrogen. Regulates intracellular CTP levels through interactions with the four ribonucleotide triphosphates. The polypeptide is CTP synthase (Dehalococcoides mccartyi (strain ATCC BAA-2100 / JCM 16839 / KCTC 5957 / BAV1)).